The chain runs to 330 residues: Phosphate acyltransferase (330 aa).

This sequence belongs to the PlsX family. Homodimer. Probably interacts with PlsY.

It is found in the cytoplasm. It catalyses the reaction a fatty acyl-[ACP] + phosphate = an acyl phosphate + holo-[ACP]. It participates in lipid metabolism; phospholipid metabolism. Functionally, catalyzes the reversible formation of acyl-phosphate (acyl-PO(4)) from acyl-[acyl-carrier-protein] (acyl-ACP). This enzyme utilizes acyl-ACP as fatty acyl donor, but not acyl-CoA. This is Phosphate acyltransferase from Streptococcus pneumoniae serotype 2 (strain D39 / NCTC 7466).